A 525-amino-acid polypeptide reads, in one-letter code: Phosphatidylinositol 4-kinase alpha 2 (525 aa).

Residues 163–278 are pleckstrin homology (PH) domain conferring phosphoinositide binding specificity; it reads SDVRQHIVDG…VKPQACIFKV (116 aa). The PI3K/PI4K catalytic domain maps to 239 to 509; sequence VDSGIPLQSA…VCTDAYNKWT (271 aa). A G-loop region spans residues 245–251; the sequence is LQSAAKV. The segment at 373–381 is catalytic loop; sequence QPKDRHNGN. The tract at residues 392–417 is activation loop; it reads HIDFGFILETSPGGNMRFENAHFKLS.

Belongs to the PI3/PI4-kinase family. Type III PI4K subfamily.

It is found in the membrane. The catalysed reaction is a 1,2-diacyl-sn-glycero-3-phospho-(1D-myo-inositol) + ATP = a 1,2-diacyl-sn-glycero-3-phospho-(1D-myo-inositol 4-phosphate) + ADP + H(+). Acts on phosphatidylinositol (PtdIns) in the first committed step in the production of the second messenger inositol-1,4,5,-trisphosphate. In Arabidopsis thaliana (Mouse-ear cress), this protein is Phosphatidylinositol 4-kinase alpha 2 (PI4KA2).